Consider the following 279-residue polypeptide: Acetyl-coenzyme A carboxylase carboxyl transferase subunit beta (279 aa).

The CoA carboxyltransferase N-terminal domain occupies 27 to 279 (LFLACPYCGT…IVKLHHRTEI (253 aa)). Residues cysteine 31, cysteine 34, cysteine 49, and cysteine 52 each coordinate Zn(2+). The C4-type zinc finger occupies 31 to 52 (CPYCGTQMYNKQLGDYRVCAKC).

It belongs to the AccD/PCCB family. In terms of assembly, acetyl-CoA carboxylase is a heterohexamer composed of biotin carboxyl carrier protein (AccB), biotin carboxylase (AccC) and two subunits each of ACCase subunit alpha (AccA) and ACCase subunit beta (AccD). Zn(2+) is required as a cofactor.

It is found in the cytoplasm. It catalyses the reaction N(6)-carboxybiotinyl-L-lysyl-[protein] + acetyl-CoA = N(6)-biotinyl-L-lysyl-[protein] + malonyl-CoA. It functions in the pathway lipid metabolism; malonyl-CoA biosynthesis; malonyl-CoA from acetyl-CoA: step 1/1. Functionally, component of the acetyl coenzyme A carboxylase (ACC) complex. Biotin carboxylase (BC) catalyzes the carboxylation of biotin on its carrier protein (BCCP) and then the CO(2) group is transferred by the transcarboxylase to acetyl-CoA to form malonyl-CoA. The polypeptide is Acetyl-coenzyme A carboxylase carboxyl transferase subunit beta (Leuconostoc citreum (strain KM20)).